The chain runs to 510 residues: Proline--tRNA ligase (510 aa).

Belongs to the class-II aminoacyl-tRNA synthetase family. ProS type 3 subfamily. As to quaternary structure, homodimer.

It localises to the cytoplasm. The catalysed reaction is tRNA(Pro) + L-proline + ATP = L-prolyl-tRNA(Pro) + AMP + diphosphate. Catalyzes the attachment of proline to tRNA(Pro) in a two-step reaction: proline is first activated by ATP to form Pro-AMP and then transferred to the acceptor end of tRNA(Pro). This Sphingomonas elodea protein is Proline--tRNA ligase.